We begin with the raw amino-acid sequence, 372 residues long: Queuine tRNA-ribosyltransferase (372 aa).

Aspartate 89 serves as the catalytic Proton acceptor. Residues 89–93 (DSGGF), aspartate 161, and glycine 232 contribute to the substrate site. The segment at 262–268 (GIGDLPS) is RNA binding. Aspartate 281 functions as the Nucleophile in the catalytic mechanism. The RNA binding; important for wobble base 34 recognition stretch occupies residues 286 to 290 (TKAAR). Zn(2+)-binding residues include cysteine 319, cysteine 321, cysteine 324, and histidine 351.

This sequence belongs to the queuine tRNA-ribosyltransferase family. Homodimer. Within each dimer, one monomer is responsible for RNA recognition and catalysis, while the other monomer binds to the replacement base PreQ1. Zn(2+) serves as cofactor.

It catalyses the reaction 7-aminomethyl-7-carbaguanine + guanosine(34) in tRNA = 7-aminomethyl-7-carbaguanosine(34) in tRNA + guanine. It functions in the pathway tRNA modification; tRNA-queuosine biosynthesis. Catalyzes the base-exchange of a guanine (G) residue with the queuine precursor 7-aminomethyl-7-deazaguanine (PreQ1) at position 34 (anticodon wobble position) in tRNAs with GU(N) anticodons (tRNA-Asp, -Asn, -His and -Tyr). Catalysis occurs through a double-displacement mechanism. The nucleophile active site attacks the C1' of nucleotide 34 to detach the guanine base from the RNA, forming a covalent enzyme-RNA intermediate. The proton acceptor active site deprotonates the incoming PreQ1, allowing a nucleophilic attack on the C1' of the ribose to form the product. After dissociation, two additional enzymatic reactions on the tRNA convert PreQ1 to queuine (Q), resulting in the hypermodified nucleoside queuosine (7-(((4,5-cis-dihydroxy-2-cyclopenten-1-yl)amino)methyl)-7-deazaguanosine). The protein is Queuine tRNA-ribosyltransferase of Chlamydia pneumoniae (Chlamydophila pneumoniae).